The following is a 224-amino-acid chain: Phosphoglycolate phosphatase (224 aa).

The Nucleophile role is filled by Asp-10. Asp-10, Asp-12, and Asp-176 together coordinate Mg(2+).

It belongs to the HAD-like hydrolase superfamily. CbbY/CbbZ/Gph/YieH family. It depends on Mg(2+) as a cofactor.

It carries out the reaction 2-phosphoglycolate + H2O = glycolate + phosphate. It participates in organic acid metabolism; glycolate biosynthesis; glycolate from 2-phosphoglycolate: step 1/1. Its function is as follows. Specifically catalyzes the dephosphorylation of 2-phosphoglycolate. Is involved in the dissimilation of the intracellular 2-phosphoglycolate formed during the DNA repair of 3'-phosphoglycolate ends, a major class of DNA lesions induced by oxidative stress. The sequence is that of Phosphoglycolate phosphatase from Pasteurella multocida (strain Pm70).